The chain runs to 87 residues: Small ribosomal subunit protein uS15 (87 aa).

Belongs to the universal ribosomal protein uS15 family. Part of the 30S ribosomal subunit. Forms a bridge to the 50S subunit in the 70S ribosome, contacting the 23S rRNA.

Its function is as follows. One of the primary rRNA binding proteins, it binds directly to 16S rRNA where it helps nucleate assembly of the platform of the 30S subunit by binding and bridging several RNA helices of the 16S rRNA. Forms an intersubunit bridge (bridge B4) with the 23S rRNA of the 50S subunit in the ribosome. This chain is Small ribosomal subunit protein uS15, found in Alkaliphilus metalliredigens (strain QYMF).